Consider the following 183-residue polypeptide: MAETTMKININNFKRIDVMQGEKQVSSEDDVVFSTVLGSCIAACLYDPIAKIGGMNHFLLAEPSGSDHDPNSLKRYGVYAMEVLINAMLAKGAHRNRLRARLYGGATMRSGFGDIGIKNAEFARRFLQDEHILLNAEDIGGTTARRVDFCPALGLARCRHVENQRPVERLEVVPDKAGDVTFF.

This sequence belongs to the CheD family.

The enzyme catalyses L-glutaminyl-[protein] + H2O = L-glutamyl-[protein] + NH4(+). In terms of biological role, probably deamidates glutamine residues to glutamate on methyl-accepting chemotaxis receptors (MCPs), playing an important role in chemotaxis. The sequence is that of Probable chemoreceptor glutamine deamidase CheD from Zymomonas mobilis subsp. mobilis (strain ATCC 31821 / ZM4 / CP4).